The sequence spans 117 residues: Ig heavy chain V region 5-84 (117 aa).

Positions 1 to 19 are cleaved as a signal peptide; it reads MNFGLSLIFLVLVLKGVLC. The segment at 20 to 49 is framework-1; the sequence is EVKLVESGGGLVQPGGSLKLSCAASGFTFS. Residues C41 and C115 are joined by a disulfide bond. The tract at residues 50-54 is complementarity-determining-1; sequence SYTMS. A framework-2 region spans residues 55 to 68; the sequence is WVRQTPEKRLEWVA. Residues 69-85 form a complementarity-determining-2 region; it reads YISNGGGSTYYPDTVKG. Positions 86–117 are framework-3; sequence RFTISRDNAKNNLYLQMSSLKSEDTAMYYCAR.

This is Ig heavy chain V region 5-84 from Mus musculus (Mouse).